We begin with the raw amino-acid sequence, 212 residues long: Metalloproteinase inhibitor 3 (212 aa).

An N-terminal signal peptide occupies residues 1–24; that stretch reads MTAWLGFLAVFLCSWSLRDLVAEA. Cysteine 25 contributes to the Zn(2+) binding site. Involved in metalloproteinase-binding stretches follow at residues 25–28 and 89–90; these read CTCV and ES. 6 cysteine pairs are disulfide-bonded: cysteine 25/cysteine 92, cysteine 27/cysteine 119, cysteine 37/cysteine 144, cysteine 146/cysteine 193, cysteine 151/cysteine 156, and cysteine 164/cysteine 185. Positions 25-144 constitute an NTR domain; sequence CTCVPIHPQD…GLNHRYHLGC (120 aa).

The protein belongs to the protease inhibitor I35 (TIMP) family.

The protein localises to the secreted. Its subcellular location is the extracellular space. It is found in the extracellular matrix. Functionally, complexes with metalloproteinases (such as collagenases) and irreversibly inactivates them by binding to their catalytic zinc cofactor. May form part of a tissue-specific acute response to remodeling stimuli. The protein is Metalloproteinase inhibitor 3 (TIMP3) of Gallus gallus (Chicken).